A 326-amino-acid polypeptide reads, in one-letter code: Flotillin-like protein FloA (326 aa).

2 helical membrane-spanning segments follow: residues 6-26 (IILF…GSSV) and 27-47 (SLWI…IVFM).

Belongs to the flotillin-like FloA family. Homooligomerizes.

The protein localises to the cell membrane. The protein resides in the membrane raft. Functionally, found in functional membrane microdomains (FMM) that may be equivalent to eukaryotic membrane rafts. FMMs are highly dynamic and increase in number as cells age. Flotillins are thought to be important factors in membrane fluidity. The sequence is that of Flotillin-like protein FloA from Desulfosudis oleivorans (strain DSM 6200 / JCM 39069 / Hxd3) (Desulfococcus oleovorans).